Here is a 268-residue protein sequence, read N- to C-terminus: GTP cyclohydrolase III (268 aa).

This sequence belongs to the archaeal-type GTP cyclohydrolase family. As to quaternary structure, homotrimer. Mg(2+) is required as a cofactor.

It catalyses the reaction GTP + 3 H2O = 2-amino-5-formylamino-6-(5-phospho-D-ribosylamino)pyrimidin-4(3H)-one + 2 phosphate + 2 H(+). In terms of biological role, catalyzes the formation of 2-amino-5-formylamino-6-ribofuranosylamino-4(3H)-pyrimidinone ribonucleotide monophosphate and inorganic phosphate from GTP. Also has an independent pyrophosphate phosphohydrolase activity. This chain is GTP cyclohydrolase III (gch3), found in Methanocaldococcus jannaschii (strain ATCC 43067 / DSM 2661 / JAL-1 / JCM 10045 / NBRC 100440) (Methanococcus jannaschii).